A 346-amino-acid polypeptide reads, in one-letter code: Phosphoribosylformylglycinamidine cyclo-ligase (346 aa).

This sequence belongs to the AIR synthase family.

It localises to the cytoplasm. The enzyme catalyses 2-formamido-N(1)-(5-O-phospho-beta-D-ribosyl)acetamidine + ATP = 5-amino-1-(5-phospho-beta-D-ribosyl)imidazole + ADP + phosphate + H(+). The protein operates within purine metabolism; IMP biosynthesis via de novo pathway; 5-amino-1-(5-phospho-D-ribosyl)imidazole from N(2)-formyl-N(1)-(5-phospho-D-ribosyl)glycinamide: step 2/2. The polypeptide is Phosphoribosylformylglycinamidine cyclo-ligase (Vibrio vulnificus (strain YJ016)).